A 661-amino-acid polypeptide reads, in one-letter code: tRNA uridine 5-carboxymethylaminomethyl modification enzyme MnmG (661 aa).

Residues 16-21 (GAGHAG), Val-128, and Ser-183 each bind FAD. The interval 206–230 (PRVNGNTIDYSKTEEEPGDKTPRHF) is disordered. Basic and acidic residues predominate over residues 216–230 (SKTEEEPGDKTPRHF). An NAD(+)-binding site is contributed by 277–291 (GPRYCPSIEDKVVRF). Gln-374 is an FAD binding site.

This sequence belongs to the MnmG family. Homodimer. Heterotetramer of two MnmE and two MnmG subunits. FAD serves as cofactor.

The protein resides in the cytoplasm. Functionally, NAD-binding protein involved in the addition of a carboxymethylaminomethyl (cmnm) group at the wobble position (U34) of certain tRNAs, forming tRNA-cmnm(5)s(2)U34. This Lactobacillus helveticus (strain DPC 4571) protein is tRNA uridine 5-carboxymethylaminomethyl modification enzyme MnmG.